A 474-amino-acid polypeptide reads, in one-letter code: Methylenetetrahydrofolate--tRNA-(uracil-5-)-methyltransferase TrmFO (474 aa).

Glycine 14 to glycine 19 contributes to the FAD binding site.

Belongs to the MnmG family. TrmFO subfamily. Requires FAD as cofactor.

Its subcellular location is the cytoplasm. The enzyme catalyses uridine(54) in tRNA + (6R)-5,10-methylene-5,6,7,8-tetrahydrofolate + NADH + H(+) = 5-methyluridine(54) in tRNA + (6S)-5,6,7,8-tetrahydrofolate + NAD(+). The catalysed reaction is uridine(54) in tRNA + (6R)-5,10-methylene-5,6,7,8-tetrahydrofolate + NADPH + H(+) = 5-methyluridine(54) in tRNA + (6S)-5,6,7,8-tetrahydrofolate + NADP(+). Functionally, catalyzes the folate-dependent formation of 5-methyl-uridine at position 54 (M-5-U54) in all tRNAs. The protein is Methylenetetrahydrofolate--tRNA-(uracil-5-)-methyltransferase TrmFO of Caulobacter vibrioides (strain ATCC 19089 / CIP 103742 / CB 15) (Caulobacter crescentus).